The chain runs to 413 residues: Endoplasmic reticulum resident protein 44.2 (413 aa).

Residues 1-21 (MNLASVLLLLAACHLSVSVNG) form the signal peptide. The region spanning 22–136 (QEHKEAIELS…LTNFVKFQLS (115 aa)) is the Thioredoxin domain. Cys-184 and Cys-233 are joined by a disulfide. Asn-264 carries an N-linked (GlcNAc...) asparagine glycan. The interval 367 to 413 (KAARGITDDHEAQAPSTRPIDTTPPPSVFKELKPSDKRYSILQKSEL) is disordered. Basic and acidic residues predominate over residues 396–413 (KELKPSDKRYSILQKSEL). The Prevents secretion from ER signature appears at 410 to 413 (KSEL).

It is found in the endoplasmic reticulum lumen. This Caenorhabditis elegans protein is Endoplasmic reticulum resident protein 44.2.